The sequence spans 207 residues: High mobility group protein B2 (207 aa).

2 consecutive DNA-binding regions (HMG box) follow at residues 9 to 79 (PRGK…KNYV) and 95 to 163 (PKRP…AAYR). Cysteine sulfonic acid (-SO3H); alternate occurs at positions 23 and 45. A disulfide bond links Cys-23 and Cys-45. Residues 52 to 76 (MSSKEKGKFEEMAKGDKARYDREMK) are compositionally biased toward basic and acidic residues. A disordered region spans residues 52 to 102 (MSSKEKGKFEEMAKGDKARYDREMKNYVPPKGEKKGKKKDPNAPKRPPSAF). Cys-106 is subject to Cysteine sulfonic acid (-SO3H). Basic and acidic residues predominate over residues 162 to 172 (YRAKSKSDAGK). A disordered region spans residues 162–207 (YRAKSKSDAGKKGPGRPAGSKKKAEPEEEEEEEEDEEEEEEEEDEE). The span at 187 to 207 (PEEEEEEEEDEEEEEEEEDEE) shows a compositional bias: acidic residues.

The protein belongs to the HMGB family. Post-translationally, reduction/oxidation of cysteine residues Cys-23, Cys-45 and Cys-106 and a possible intramolecular disulfide bond involving Cys-23 and Cys-45 give rise to different redox forms with specific functional activities in various cellular compartments: 1- fully reduced HMGB2 (HMGB2C23hC45hC106h), 2- disulfide HMGB2 (HMGB2C23-C45C106h) and 3- sulfonyl HMGB2 (HMGB2C23soC45soC106so).

The protein resides in the nucleus. Its subcellular location is the chromosome. It localises to the cytoplasm. The protein localises to the secreted. Functionally, multifunctional protein with various roles in different cellular compartments. May act in a redox sensitive manner. Associates with chromatin and binds DNA with a preference to non-canonical DNA structures such as single-stranded DNA. Can bent DNA and enhance DNA flexibility by looping thus providing a mechanism to promote activities on various gene promoters. Proposed to be involved in the innate immune response to nucleic acids by acting as a cytoplasmic promiscuous immunogenic DNA/RNA sensor. Involved in inflammatory response to antigenic stimulus coupled with pro-inflammatory activity. The sequence is that of High mobility group protein B2 (HMGB2) from Gallus gallus (Chicken).